The following is an 803-amino-acid chain: Spondin-1 (803 aa).

Positions 1 to 23 are cleaved as a signal peptide; the sequence is MGLIFQPLFWQYVATSYALMVLG. The Reelin domain maps to 24–190; the sequence is FLDETVEKAI…DLTLEGGNEK (167 aa). 14 disulfides stabilise this stretch: Cys39–Cys124, Cys152–Cys178, Cys195–Cys331, Cys196–Cys335, Cys198–Cys409, Cys437–Cys474, Cys448–Cys483, Cys453–Cys488, Cys496–Cys532, Cys507–Cys511, Cys542–Cys548, Cys553–Cys589, Cys564–Cys568, and Cys599–Cys604. Positions 191–383 constitute a Spondin domain; the sequence is TIPDCCACGT…LTSLDHPQSP (193 aa). Asn210 carries an N-linked (GlcNAc...) asparagine glycan. Ca(2+)-binding residues include Asp320, Asp349, and Asp353. The disordered stretch occupies residues 353–389; it reads DSGVTYESPNKPTIPQDKIRPLTSLDHPQSPSMTRGG. Over residues 354 to 365 the composition is skewed to polar residues; that stretch reads SGVTYESPNKPT. 5 TSP type-1 domains span residues 436 to 489, 495 to 549, 552 to 605, 608 to 662, and 664 to 717; these read TCIY…PGCS, TCMM…EECE, SCIV…PECH, PCVL…PECP, and SCEL…RKCQ. N-linked (GlcNAc...) asparagine glycosylation occurs at Asn677. A disordered region spans residues 722–741; sequence NERRHLKDAREKRRSEKIKE. Residues 750–802 enclose the TSP type-1 6 domain; that stretch reads VCKMKPWTAWTECTKFCGGGIQERFMTVKKRFKSSQFTSCKDKKEIRACNVHP.

Expressed at high levels in the floor plate.

The protein resides in the secreted. Its subcellular location is the extracellular space. It is found in the extracellular matrix. Its function is as follows. Promotes the attachment of spinal cord and sensory neuron cells and the outgrowth of neurites in vitro. May contribute to the growth and guidance of axons in both the spinal cord and the PNS. This is Spondin-1 (spon1) from Xenopus laevis (African clawed frog).